Consider the following 142-residue polypeptide: Large ribosomal subunit protein uL11 (142 aa).

The protein belongs to the universal ribosomal protein uL11 family. In terms of assembly, part of the ribosomal stalk of the 50S ribosomal subunit. Interacts with L10 and the large rRNA to form the base of the stalk. L10 forms an elongated spine to which L12 dimers bind in a sequential fashion forming a multimeric L10(L12)X complex. In terms of processing, one or more lysine residues are methylated.

In terms of biological role, forms part of the ribosomal stalk which helps the ribosome interact with GTP-bound translation factors. In Xylella fastidiosa (strain 9a5c), this protein is Large ribosomal subunit protein uL11.